The primary structure comprises 442 residues: GTPase Der (442 aa).

EngA-type G domains follow at residues 4-169 (PIVA…PENN) and 178-353 (IKIA…EQAT). GTP-binding positions include 10–17 (GRPNVGKS), 57–61 (DTGGL), 121–124 (NKIE), 184–191 (GRPNVGKS), 231–235 (DTAGM), and 296–299 (NKWD). Residues 354 to 438 (RRISTSVLNE…PMRFFIRERE (85 aa)) form the KH-like domain.

This sequence belongs to the TRAFAC class TrmE-Era-EngA-EngB-Septin-like GTPase superfamily. EngA (Der) GTPase family. Associates with the 50S ribosomal subunit.

Its function is as follows. GTPase that plays an essential role in the late steps of ribosome biogenesis. The protein is GTPase Der of Heliobacterium modesticaldum (strain ATCC 51547 / Ice1).